The chain runs to 262 residues: Encapsulin nanocompartment protein Rv1762c (262 aa).

The protein belongs to the UPF0145 family.

It localises to the encapsulin nanocompartment. Functionally, cargo protein of a type 1 encapsulin nanocompartment possibly involved in protection against oxidative stress. The chain is Encapsulin nanocompartment protein Rv1762c from Mycobacterium tuberculosis (strain ATCC 25618 / H37Rv).